The following is a 680-amino-acid chain: Probable ATP-dependent RNA helicase pitchoune (680 aa).

The interval M1–F168 is disordered. Over residues K29 to N42 the composition is skewed to polar residues. The span at D59–Q69 shows a compositional bias: acidic residues. A compositionally biased stretch (basic residues) spans P74–P83. Acidic residues predominate over residues S95 to P141. The Q motif motif lies at F187–S215. Positions L218 to Y393 constitute a Helicase ATP-binding domain. ATP is bound at residue A231 to T238. The DEVD box motif lies at D341 to D344. A Helicase C-terminal domain is found at G407–I577. The disordered stretch occupies residues G659 to R680. Residues V670–R680 are compositionally biased toward basic and acidic residues.

This sequence belongs to the DEAD box helicase family. DDX18/HAS1 subfamily.

The protein resides in the nucleus. The protein localises to the nucleolus. It catalyses the reaction ATP + H2O = ADP + phosphate + H(+). Its function is as follows. Probable RNA-dependent helicase. Functions in cell growth and proliferation. May have a role in ribosome biogenesis and, consequently, in protein biosynthesis. The sequence is that of Probable ATP-dependent RNA helicase pitchoune (pit) from Drosophila melanogaster (Fruit fly).